The following is an 860-amino-acid chain: M-phase phosphoprotein 8 (860 aa).

The residue at position 1 (Met1) is an N-acetylmethionine. 4 positions are modified to phosphoserine: Ser51, Ser85, Ser136, and Ser138. A Chromo domain is found at 59-118 (FEVEKILDMKTEGGKVLYKVRWKGYTSDDDTWEPEIHLEDCKEVLLEFRKKIAENKAKAV). The interval 80-87 (WKGYTSDD) is histone H3K9me3 binding. Over residues 129–141 (NDIFEANSDSDQQ) the composition is skewed to polar residues. Residues 129-191 (NDIFEANSDS…SKPDLESSLE (63 aa)) are disordered. Thr144 carries the post-translational modification Phosphothreonine. Residues Ser149 and Ser164 each carry the phosphoserine; by CDK1 modification. 2 stretches are compositionally biased toward basic and acidic residues: residues 159–169 (QREEKSPDDLK) and 177–186 (KLKDKSKPDL). 3 positions are modified to phosphoserine: Ser188, Ser189, and Ser192. Residues 206–249 (AKEELKESKKPKKDEVKETKELKKVKKGEIRDLKTKTREDPKEN) show a composition bias toward basic and acidic residues. The disordered stretch occupies residues 206 to 440 (AKEELKESKK…GRKEPKGLKT (235 aa)). The segment covering 259 to 268 (ESQVESESSV) has biased composition (low complexity). 3 positions are modified to phosphoserine: Ser266, Ser272, and Ser279. The segment covering 280-314 (EGLHSDSREEKQNTKSARERAGQDMGLEHGFEKPL) has biased composition (basic and acidic residues). Ser319 is subject to Phosphoserine. A Phosphothreonine; by CDK1 modification is found at Thr334. Positions 336-377 (RKAEDTRENRKLENKNAFLEKKTVPKKQRNQDRSKSAAELEK) are enriched in basic and acidic residues. Position 385 is a phosphothreonine; by CDK1 (Thr385). Ser392, Ser400, and Ser403 each carry phosphoserine. Residues 408–440 (KETKRNESKEKYQKRHDSDKEEKGRKEPKGLKT) show a composition bias toward basic and acidic residues. Residues 431–560 (GRKEPKGLKT…HLDGKDENFA (130 aa)) are interaction with humanin. Thr454 carries the phosphothreonine modification. Residues 458–496 (KNDVSENNRKREEIPLDFKTIDDHKTKENKQSLKERRNT) are disordered. 4 ANK repeats span residues 600-629 (SGMT…KVNG), 633-662 (NGTT…FVNV), 666-695 (NGET…DCNI), and 699-728 (HQNS…TLSR).

In terms of assembly, homodimer. Interacts (via chromo domain) with histone H3K9me3. Has the highest affinity for H3K9me3, and lesser affinity for H3K9me2 and H3K9me1. Component of the HUSH complex; at least composed of TASOR, PPHLN1 and MPHOSPH8. Interacts with DNMT3, EHMT1 and SETDB1. Interacts with MORC2; the interaction associateS MORC2 with the HUSH complex which recruits MORC2 to heterochromatic loci. Interacts with ZNF638; leading to recruitment of the HUSH complex to unintegrated retroviral DNA. Interacts with TASOR. Interacts with humanin. Phosphorylated in M (mitotic) phase. Phosphorylation by CDK1 promotes dissociation from chromatin.

It localises to the nucleus. The protein resides in the chromosome. Functionally, heterochromatin component that specifically recognizes and binds methylated 'Lys-9' of histone H3 (H3K9me) and promotes recruitment of proteins that mediate epigenetic repression. Mediates recruitment of the HUSH complex to H3K9me3 sites: the HUSH complex is recruited to genomic loci rich in H3K9me3 and is required to maintain transcriptional silencing by promoting recruitment of SETDB1, a histone methyltransferase that mediates further deposition of H3K9me3, as well as MORC2. Binds H3K9me and promotes DNA methylation by recruiting DNMT3A to target CpG sites; these can be situated within the coding region of the gene. Mediates down-regulation of CDH1 expression. Also represses L1 retrotransposons in collaboration with MORC2 and, probably, SETDB1, the silencing is dependent of repressive epigenetic modifications, such as H3K9me3 mark. Silencing events often occur within introns of transcriptionally active genes, and lead to the down-regulation of host gene expression. The HUSH complex is also involved in the silencing of unintegrated retroviral DNA by being recruited by ZNF638: some part of the retroviral DNA formed immediately after infection remains unintegrated in the host genome and is transcriptionally repressed. The chain is M-phase phosphoprotein 8 from Homo sapiens (Human).